Here is a 461-residue protein sequence, read N- to C-terminus: A-type ATP synthase subunit B (461 aa).

Belongs to the ATPase alpha/beta chains family. Has multiple subunits with at least A(3), B(3), C, D, E, F, H, I and proteolipid K(x).

The protein localises to the cell membrane. In terms of biological role, component of the A-type ATP synthase that produces ATP from ADP in the presence of a proton gradient across the membrane. The B chain is a regulatory subunit. The polypeptide is A-type ATP synthase subunit B (Nitrosopumilus maritimus (strain SCM1)).